The following is a 169-amino-acid chain: ATP synthase subunit b (169 aa).

The helical transmembrane segment at 12–32 (HIYLGNAIWYLLCFAILMLLI) threads the bilayer.

The protein belongs to the ATPase B chain family. As to quaternary structure, F-type ATPases have 2 components, F(1) - the catalytic core - and F(0) - the membrane proton channel. F(1) has five subunits: alpha(3), beta(3), gamma(1), delta(1), epsilon(1). F(0) has three main subunits: a(1), b(2) and c(10-14). The alpha and beta chains form an alternating ring which encloses part of the gamma chain. F(1) is attached to F(0) by a central stalk formed by the gamma and epsilon chains, while a peripheral stalk is formed by the delta and b chains.

The protein resides in the cell membrane. Its activity is regulated as follows. Increases 2-fold following exposure to low pH. Its function is as follows. F(1)F(0) ATP synthase produces ATP from ADP in the presence of a proton or sodium gradient. F-type ATPases consist of two structural domains, F(1) containing the extramembraneous catalytic core and F(0) containing the membrane proton channel, linked together by a central stalk and a peripheral stalk. During catalysis, ATP synthesis in the catalytic domain of F(1) is coupled via a rotary mechanism of the central stalk subunits to proton translocation. Component of the F(0) channel, it forms part of the peripheral stalk, linking F(1) to F(0). This chain is ATP synthase subunit b, found in Lactobacillus acidophilus (strain ATCC 700396 / NCK56 / N2 / NCFM).